Reading from the N-terminus, the 71-residue chain is DNA gyrase inhibitor YacG (71 aa).

Positions 9, 12, 28, and 32 each coordinate Zn(2+). The tract at residues 43-71 (EEKRIPSQSESNDSDEWSEMPEQDPKPFN) is disordered. The span at 54–64 (NDSDEWSEMPE) shows a compositional bias: acidic residues.

It belongs to the DNA gyrase inhibitor YacG family. Interacts with GyrB. It depends on Zn(2+) as a cofactor.

Inhibits all the catalytic activities of DNA gyrase by preventing its interaction with DNA. Acts by binding directly to the C-terminal domain of GyrB, which probably disrupts DNA binding by the gyrase. The sequence is that of DNA gyrase inhibitor YacG from Proteus mirabilis (strain HI4320).